The chain runs to 649 residues: Sulfate transporter 1.1 (649 aa).

The tract at residues Met-1 to Val-20 is disordered. The Cytoplasmic segment spans residues Met-1 to Arg-86. Residues Gly-87 to Ala-107 traverse the membrane as a helical segment. Residues Lys-108–Asn-111 lie on the Extracellular side of the membrane. A helical transmembrane segment spans residues Val-112–Gly-132. Over Ser-133–Asp-136 the chain is Cytoplasmic. The chain crosses the membrane as a helical span at residues Ile-137–Ile-157. Residues Asp-158–Arg-168 are Extracellular-facing. 2 helical membrane passes run Leu-169–Leu-189 and Gly-190–Ile-210. Over Thr-211 to Asn-248 the chain is Extracellular. Residues Trp-249–Gly-269 traverse the membrane as a helical segment. Over Lys-270–Leu-275 the chain is Cytoplasmic. The chain crosses the membrane as a helical span at residues Phe-276–Ile-296. At Phe-297–Arg-334 the chain is on the extracellular side. A helical membrane pass occupies residues Ile-335–Ala-355. Topologically, residues Ala-356 to Glu-367 are cytoplasmic. Residues Met-368–Gly-388 form a helical membrane-spanning segment. Topologically, residues Ser-389–Ala-404 are extracellular. A helical membrane pass occupies residues Val-405 to Phe-425. At Lys-426 to Ala-431 the chain is on the cytoplasmic side. A helical transmembrane segment spans residues Ile-432–Leu-452. The Extracellular portion of the chain corresponds to Ile-453–Met-465. A helical transmembrane segment spans residues Gly-466–Ile-486. Residues Ser-487 to Thr-649 are Cytoplasmic-facing. The STAS domain maps to Gln-517–Cys-640.

It belongs to the SLC26A/SulP transporter (TC 2.A.53) family. Interacts with OASA1 through its STAS domain. In terms of tissue distribution, expressed in lateral root cap, root hairs, epidermal and cortical cells of roots.

It is found in the membrane. Functionally, high-affinity H(+)/sulfate cotransporter that mediates the uptake of the environmental sulfate by plant roots under low-sulfur conditions. Plays a central role in the regulation of sulfate assimilation. This Arabidopsis thaliana (Mouse-ear cress) protein is Sulfate transporter 1.1 (SULTR1;1).